Here is a 462-residue protein sequence, read N- to C-terminus: Glutamate decarboxylase alpha (462 aa).

At Lys273 the chain carries N6-(pyridoxal phosphate)lysine.

Belongs to the group II decarboxylase family. Pyridoxal 5'-phosphate serves as cofactor.

The enzyme catalyses L-glutamate + H(+) = 4-aminobutanoate + CO2. Its function is as follows. Converts internalized glutamate to GABA and increases the internal pH. Involved in glutamate-dependent acid resistance in gastric fluid. The sequence is that of Glutamate decarboxylase alpha (gadA) from Listeria monocytogenes serovar 1/2a (strain ATCC BAA-679 / EGD-e).